Reading from the N-terminus, the 1846-residue chain is Insulin-like receptor (1846 aa).

N-linked (GlcNAc...) asparagine glycosylation is found at asparagine 113, asparagine 180, and asparagine 364. Cystine bridges form between cysteine 371–cysteine 386, cysteine 393–cysteine 401, cysteine 397–cysteine 410, cysteine 413–cysteine 422, and cysteine 426–cysteine 438. Asparagine 453 carries an N-linked (GlcNAc...) asparagine glycan. Intrachain disulfides connect cysteine 469-cysteine 483 and cysteine 486-cysteine 490. Asparagine 518 carries an N-linked (GlcNAc...) asparagine glycan. Cysteine 615 and cysteine 646 form a disulfide bridge. N-linked (GlcNAc...) asparagine glycosylation is found at asparagine 652, asparagine 671, and asparagine 696. Fibronectin type-III domains follow at residues 775 to 869, 969 to 1067, and 1077 to 1179; these read TPDP…TMMG, KPSS…LKRT, and LNET…TPGF. The interval 944–980 is disordered; that stretch reads EKAENLGKAPKTLGGKKPLIHISKKKPSSSSTTSTPA. A compositionally biased stretch (basic residues) spans 961 to 970; sequence PLIHISKKKP. Residues 970–1183 are Extracellular-facing; that stretch reads PSSSSTTSTP…VMTPGFFTVE (214 aa). Residues 971 to 980 are compositionally biased toward low complexity; it reads SSSSTTSTPA. Asparagine 1017, asparagine 1047, asparagine 1078, asparagine 1087, and asparagine 1093 each carry an N-linked (GlcNAc...) asparagine glycan. The chain crosses the membrane as a helical span at residues 1184–1204; sequence IILGMLLVFLILMSIAGCIIY. Residues 1205–1846 are Cytoplasmic-facing; the sequence is YYIQVRYGKK…IEDNEHHPLV (642 aa). The 283-residue stretch at 1246 to 1528 folds into the Protein kinase domain; sequence VVLGQQCGEG…LLAAEASPEF (283 aa). Residues 1252–1260 and lysine 1282 each bind ATP; that span reads CGEGSFGKV. The active-site Proton acceptor is the aspartate 1388. 2 disordered regions span residues 1718-1742 and 1769-1826; these read ISSMDTRRSTGASSSSYGVPQTNWS and QQQQ…IFNG. Residues 1726–1742 show a composition bias toward polar residues; the sequence is STGASSSSYGVPQTNWS. The segment covering 1808–1821 has biased composition (low complexity); that stretch reads YRNNGSPSRNGNSR.

It belongs to the protein kinase superfamily. Tyr protein kinase family. Insulin receptor subfamily. Tetramer of 2 alpha and 2 beta chains linked by disulfide bonds. The alpha chains contribute to the formation of the ligand-binding domain, while the beta chains carry the kinase domain. Interacts (via cytoplasmic domain) with shc-1 (PID domain). Interacts (via kinase domain) with daf-18 (via C-terminus). As to quaternary structure, interacts with casy-1; promoting axonal localization. Mg(2+) is required as a cofactor.

The protein localises to the membrane. It localises to the cell projection. The protein resides in the axon. The catalysed reaction is L-tyrosyl-[protein] + ATP = O-phospho-L-tyrosyl-[protein] + ADP + H(+). Its activity is regulated as follows. Autophosphorylation activates the kinase activity. Interaction with shc-1 may inhibit its activity. In terms of biological role, insulin receptor-like tyrosine kinase which regulates metabolism, controls longevity and prevents developmental arrest at the dauer stage. Binding of INS family members may either stimulate, or antagonize, association of the receptor with downstream mediators such as pdk-1 and age-1. Required for germline progenitor proliferation during larval development. Plays a role in maintaining gonad integrity in a daf-16/FOXO-dependent manner. Required for the response to environmental stimuli such as light, food, pheromone, and temperature. Negatively regulates resistance to UV and oxidative stress. In a daf-16/FOXO-dependent manner, plays a role in regulating the response to white light. Role in immune function and pathogen resistance. Negatively regulates autophagy. Regulates daf-18/PTEN protein levels. Plays a role in controlling seam cell development during the larval stages. Functionally, required for taste avoidance learning in the cell body of ASER gustatory neurons. Required for taste avoidance learning in axons of ASER gustatory neurons. The chain is Insulin-like receptor from Caenorhabditis elegans.